A 212-amino-acid chain; its full sequence is Phosphatidylserine decarboxylase proenzyme (212 aa).

The active-site Schiff-base intermediate with substrate; via pyruvic acid is the serine 182. Serine 182 bears the Pyruvic acid (Ser); by autocatalysis mark.

This sequence belongs to the phosphatidylserine decarboxylase family. PSD-A subfamily. In terms of assembly, heterodimer of a large membrane-associated beta subunit and a small pyruvoyl-containing alpha subunit. Pyruvate serves as cofactor. In terms of processing, is synthesized initially as an inactive proenzyme. Formation of the active enzyme involves a self-maturation process in which the active site pyruvoyl group is generated from an internal serine residue via an autocatalytic post-translational modification. Two non-identical subunits are generated from the proenzyme in this reaction, and the pyruvate is formed at the N-terminus of the alpha chain, which is derived from the carboxyl end of the proenzyme. The post-translation cleavage follows an unusual pathway, termed non-hydrolytic serinolysis, in which the side chain hydroxyl group of the serine supplies its oxygen atom to form the C-terminus of the beta chain, while the remainder of the serine residue undergoes an oxidative deamination to produce ammonia and the pyruvoyl prosthetic group on the alpha chain.

Its subcellular location is the cell membrane. The enzyme catalyses a 1,2-diacyl-sn-glycero-3-phospho-L-serine + H(+) = a 1,2-diacyl-sn-glycero-3-phosphoethanolamine + CO2. Its pathway is phospholipid metabolism; phosphatidylethanolamine biosynthesis; phosphatidylethanolamine from CDP-diacylglycerol: step 2/2. Catalyzes the formation of phosphatidylethanolamine (PtdEtn) from phosphatidylserine (PtdSer). This Paraburkholderia phymatum (strain DSM 17167 / CIP 108236 / LMG 21445 / STM815) (Burkholderia phymatum) protein is Phosphatidylserine decarboxylase proenzyme.